Here is a 277-residue protein sequence, read N- to C-terminus: MEPQDLHLDYGLVESILIPFIRNEIRKFGFRSVVLGLSGGIDSAVVCELAARSLGADNVLALLMPYKTSSRESLEHAQLMVDRLGIRAETMPVTGVVDAFFETRPDASRLRRGNVMARSRMLCLYDVSARDGCLVLGTSNKTELMLGYGTMFGDMASAVNPIGDLYKTQLWGLARHLGVPSELIDKQPSADLWEGQSDEADLGFSYEEVDQLLYMMLEERMERDAILAEGIAPAFYDRVRQMVVRNQYKRMMPVIAKLSSRTPGIDFRYARDWQEMK.

36 to 43 provides a ligand contact to ATP; it reads GLSGGIDS. D42 is a binding site for Mg(2+). Deamido-NAD(+) is bound at residue R118. Position 138 (T138) interacts with ATP. A Mg(2+)-binding site is contributed by E143. Residues K167 and S189 each contribute to the ATP site.

It belongs to the NAD synthetase family. Homodimer.

It catalyses the reaction deamido-NAD(+) + NH4(+) + ATP = AMP + diphosphate + NAD(+) + H(+). It participates in cofactor biosynthesis; NAD(+) biosynthesis; NAD(+) from deamido-NAD(+) (ammonia route): step 1/1. Functionally, catalyzes the ATP-dependent amidation of deamido-NAD to form NAD. Uses ammonia as a nitrogen source. This Chlorobaculum parvum (strain DSM 263 / NCIMB 8327) (Chlorobium vibrioforme subsp. thiosulfatophilum) protein is NH(3)-dependent NAD(+) synthetase.